Here is a 220-residue protein sequence, read N- to C-terminus: Fructose-6-phosphate aldolase (220 aa).

Lys-85 (schiff-base intermediate with substrate) is an active-site residue.

The protein belongs to the transaldolase family. Type 3A subfamily. Homodecamer.

It is found in the cytoplasm. It carries out the reaction beta-D-fructose 6-phosphate = dihydroxyacetone + D-glyceraldehyde 3-phosphate. Functionally, catalyzes the reversible formation of fructose 6-phosphate from dihydroxyacetone and D-glyceraldehyde 3-phosphate via an aldolization reaction. This is Fructose-6-phosphate aldolase from Klebsiella pneumoniae subsp. pneumoniae (strain ATCC 700721 / MGH 78578).